Consider the following 130-residue polypeptide: Protein ApaG (130 aa).

Residues 3–127 enclose the ApaG domain; the sequence is RAVTRQIEVT…FSLDSPDNKR (125 aa).

The protein is Protein ApaG of Bradyrhizobium diazoefficiens (strain JCM 10833 / BCRC 13528 / IAM 13628 / NBRC 14792 / USDA 110).